Reading from the N-terminus, the 555-residue chain is T-complex protein 1 subunit gamma (555 aa).

Residues 527 to 555 (KKKQAPGSGPSKPTIETEGDADNEQILPD) form a disordered region.

Belongs to the TCP-1 chaperonin family. In terms of assembly, heterooligomeric complex of about 850 to 900 kDa that forms two stacked rings, 12 to 16 nm in diameter. Interacts with CCT8.

The protein localises to the cytoplasm. Functionally, molecular chaperone; assists the folding of proteins upon ATP hydrolysis. Known to play a role, in vitro, in the folding of actin and tubulin. The protein is T-complex protein 1 subunit gamma of Arabidopsis thaliana (Mouse-ear cress).